The chain runs to 131 residues: Con-Ins Q1 (131 aa).

An N-terminal signal peptide occupies residues 1 to 24 (MTTSSYFLLVALGLLLYLCQSSFG). 4 cysteine pairs are disulfide-bonded: cysteine 29/cysteine 107, cysteine 41/cysteine 110, cysteine 53/cysteine 123, and cysteine 109/cysteine 114. The propeptide at 59–92 (LQGGTDDARKKRGRASLLRKRRGFLSMLKARAKR) is c peptide. Position 118 is a 4-carboxyglutamate; partial (glutamate 118). Serine amide is present on serine 130.

This sequence belongs to the insulin family. Heterodimer of A and B chains; disulfide-linked. In terms of tissue distribution, expressed by the venom gland.

It is found in the secreted. Functionally, this venom insulin facilitates prey capture by rapidly inducing hypoglycemic shock. Intraperitoneal injection of this peptide into zebrafish lowers blood glucose with the same potency than human insulin. In vivo, when applied to water, this peptide reduces overall locomotor activity of zebrafish larvae, observed as a significant decrease in the percentage of time spent swimming and movement frequency. The polypeptide is Con-Ins Q1 (Conus quercinus (Oak cone)).